The chain runs to 950 residues: Valine--tRNA ligase, mitochondrial (950 aa).

The transit peptide at 1-90 (MFHFQRSFSS…ITIQDALARF (90 aa)) directs the protein to the mitochondrion. The 'HIGH' region motif lies at 67–77 (PNITGKLHIGH). The 'KMSKS' region signature appears at 556-560 (KMSKS). An ATP-binding site is contributed by Lys-559.

The protein belongs to the class-I aminoacyl-tRNA synthetase family.

It is found in the mitochondrion. It catalyses the reaction tRNA(Val) + L-valine + ATP = L-valyl-tRNA(Val) + AMP + diphosphate. The sequence is that of Valine--tRNA ligase, mitochondrial (vas1) from Schizosaccharomyces pombe (strain 972 / ATCC 24843) (Fission yeast).